Here is a 330-residue protein sequence, read N- to C-terminus: tRNA N6-adenosine threonylcarbamoyltransferase (330 aa).

The Fe cation site is built by histidine 110 and histidine 114. Substrate contacts are provided by residues 133–137 (LVSGG), aspartate 166, glycine 179, and asparagine 268. Position 296 (aspartate 296) interacts with Fe cation.

The protein belongs to the KAE1 / TsaD family. Fe(2+) is required as a cofactor.

It localises to the cytoplasm. It catalyses the reaction L-threonylcarbamoyladenylate + adenosine(37) in tRNA = N(6)-L-threonylcarbamoyladenosine(37) in tRNA + AMP + H(+). Functionally, required for the formation of a threonylcarbamoyl group on adenosine at position 37 (t(6)A37) in tRNAs that read codons beginning with adenine. Is involved in the transfer of the threonylcarbamoyl moiety of threonylcarbamoyl-AMP (TC-AMP) to the N6 group of A37, together with TsaE and TsaB. TsaD likely plays a direct catalytic role in this reaction. The polypeptide is tRNA N6-adenosine threonylcarbamoyltransferase (Kosmotoga olearia (strain ATCC BAA-1733 / DSM 21960 / TBF 19.5.1)).